The sequence spans 478 residues: Aspartyl/glutamyl-tRNA(Asn/Gln) amidotransferase subunit B (478 aa).

It belongs to the GatB/GatE family. GatB subfamily. In terms of assembly, heterotrimer of A, B and C subunits.

It carries out the reaction L-glutamyl-tRNA(Gln) + L-glutamine + ATP + H2O = L-glutaminyl-tRNA(Gln) + L-glutamate + ADP + phosphate + H(+). It catalyses the reaction L-aspartyl-tRNA(Asn) + L-glutamine + ATP + H2O = L-asparaginyl-tRNA(Asn) + L-glutamate + ADP + phosphate + 2 H(+). Its function is as follows. Allows the formation of correctly charged Asn-tRNA(Asn) or Gln-tRNA(Gln) through the transamidation of misacylated Asp-tRNA(Asn) or Glu-tRNA(Gln) in organisms which lack either or both of asparaginyl-tRNA or glutaminyl-tRNA synthetases. The reaction takes place in the presence of glutamine and ATP through an activated phospho-Asp-tRNA(Asn) or phospho-Glu-tRNA(Gln). The protein is Aspartyl/glutamyl-tRNA(Asn/Gln) amidotransferase subunit B of Syntrophotalea carbinolica (strain DSM 2380 / NBRC 103641 / GraBd1) (Pelobacter carbinolicus).